Reading from the N-terminus, the 310-residue chain is tRNA dimethylallyltransferase (310 aa).

14–21 provides a ligand contact to ATP; sequence GPTASGKS. 16-21 is a substrate binding site; it reads TASGKS. Interaction with substrate tRNA stretches follow at residues 39–42 and 163–167; these read DSMQ and QRIVR.

It belongs to the IPP transferase family. Monomer. Mg(2+) serves as cofactor.

It catalyses the reaction adenosine(37) in tRNA + dimethylallyl diphosphate = N(6)-dimethylallyladenosine(37) in tRNA + diphosphate. Its function is as follows. Catalyzes the transfer of a dimethylallyl group onto the adenine at position 37 in tRNAs that read codons beginning with uridine, leading to the formation of N6-(dimethylallyl)adenosine (i(6)A). This Brucella melitensis biotype 2 (strain ATCC 23457) protein is tRNA dimethylallyltransferase.